Here is a 384-residue protein sequence, read N- to C-terminus: Transcription factor 7 (384 aa).

Over residues 1–16 (MPQLDSGGGGAGGGDD) the composition is skewed to gly residues. Residues 1–59 (MPQLDSGGGGAGGGDDLGAPDELLAFQDEGEEQDDKSRDSAAGPERDLAELKSSLVNES) form a CTNNB1-binding region. Disordered regions lie at residues 1–88 (MPQL…LGRE), 133–183 (PPSG…QKQV), and 337–384 (SARD…MTVL). A compositionally biased stretch (basic and acidic residues) spans 35–50 (DKSRDSAAGPERDLAE). A compositionally biased stretch (gly residues) spans 62–78 (AAGGAGIPGVPGAGAGA). The HMG box DNA-binding region spans 269-337 (IKKPLNAFML…LHMQLYPGWS (69 aa)). The Nuclear localization signal motif lies at 344 to 348 (KKKRR). Basic and acidic residues predominate over residues 352–370 (KHQESTTGGKRNAFGTYPE). Residues 374–384 (APAPFLPMTVL) show a composition bias toward low complexity.

This sequence belongs to the TCF/LEF family. Binds the armadillo repeat of CTNNB1 and forms a stable complex. Interacts with TLE5, TLE1, TLE2, TLE3 and TLE4. Interacts with MLLT11. Long isoform interacts (via N-terminus) with SOX13; inhibits WNT-mediated transcriptional activity. Interacts with DAZAP2. As to expression, predominantly expressed in T-cells. Also detected in proliferating intestinal epithelial cells and in the basal epithelial cells of mammary gland epithelium.

It is found in the nucleus. Its function is as follows. Transcriptional activator involved in T-cell lymphocyte differentiation. Necessary for the survival of CD4(+) CD8(+) immature thymocytes. Isoforms lacking the N-terminal CTNNB1 binding domain cannot fulfill this role. Binds to the T-lymphocyte-specific enhancer element (5'-WWCAAAG-3') found in the promoter of the CD3E gene. Represses expression of the T-cell receptor gamma gene in alpha-beta T-cell lineages. Required for the development of natural killer receptor-positive lymphoid tissue inducer T-cells. TLE1, TLE2, TLE3 and TLE4 repress transactivation mediated by TCF7 and CTNNB1. May also act as feedback transcriptional repressor of CTNNB1 and TCF7L2 target genes. The chain is Transcription factor 7 from Homo sapiens (Human).